Consider the following 229-residue polypeptide: Large ribosomal subunit protein uL1 (229 aa).

The protein belongs to the universal ribosomal protein uL1 family. As to quaternary structure, part of the 50S ribosomal subunit.

In terms of biological role, binds directly to 23S rRNA. The L1 stalk is quite mobile in the ribosome, and is involved in E site tRNA release. Functionally, protein L1 is also a translational repressor protein, it controls the translation of the L11 operon by binding to its mRNA. This Streptococcus thermophilus (strain CNRZ 1066) protein is Large ribosomal subunit protein uL1.